The sequence spans 68 residues: Sec-independent protein translocase protein TatA (68 aa).

The helical transmembrane segment at 1–21 (MGSFSIWHWLIVLAVVLLLFG) threads the bilayer. The tract at residues 42–68 (GMGDDEVASADKSVDGKTVDHKSDEVR) is disordered. The segment covering 53 to 68 (KSVDGKTVDHKSDEVR) has biased composition (basic and acidic residues).

This sequence belongs to the TatA/E family. As to quaternary structure, the Tat system comprises two distinct complexes: a TatABC complex, containing multiple copies of TatA, TatB and TatC subunits, and a separate TatA complex, containing only TatA subunits. Substrates initially bind to the TatABC complex, which probably triggers association of the separate TatA complex to form the active translocon.

Its subcellular location is the cell inner membrane. Functionally, part of the twin-arginine translocation (Tat) system that transports large folded proteins containing a characteristic twin-arginine motif in their signal peptide across membranes. TatA could form the protein-conducting channel of the Tat system. In Rhizobium meliloti (strain 1021) (Ensifer meliloti), this protein is Sec-independent protein translocase protein TatA.